A 474-amino-acid chain; its full sequence is 3-isopropylmalate dehydratase large subunit (474 aa).

Residues Cys-353, Cys-413, and Cys-416 each contribute to the [4Fe-4S] cluster site.

It belongs to the aconitase/IPM isomerase family. LeuC type 1 subfamily. In terms of assembly, heterodimer of LeuC and LeuD. [4Fe-4S] cluster serves as cofactor.

It carries out the reaction (2R,3S)-3-isopropylmalate = (2S)-2-isopropylmalate. It participates in amino-acid biosynthesis; L-leucine biosynthesis; L-leucine from 3-methyl-2-oxobutanoate: step 2/4. Functionally, catalyzes the isomerization between 2-isopropylmalate and 3-isopropylmalate, via the formation of 2-isopropylmaleate. This is 3-isopropylmalate dehydratase large subunit from Roseiflexus sp. (strain RS-1).